An 87-amino-acid chain; its full sequence is Putative sodium channel toxin Ts40 (87 aa).

The first 19 residues, Met-1–Gln-19, serve as a signal peptide directing secretion. 3 disulfide bridges follow: Cys-41-Cys-63, Cys-47-Cys-68, and Cys-51-Cys-70.

It belongs to the long (4 C-C) scorpion toxin superfamily. Sodium channel inhibitor family. As to expression, expressed by the venom gland.

The protein resides in the secreted. Its function is as follows. Putative sodium channel toxin. The protein is Putative sodium channel toxin Ts40 of Tityus serrulatus (Brazilian scorpion).